An 808-amino-acid chain; its full sequence is Phospholipase D alpha 1 (808 aa).

In terms of domain architecture, C2 spans 1-125 (MAQILLHGTL…LEGEEIDKWV (125 aa)). Residue Asp-186 participates in Ca(2+) binding. Positions 326 to 364 (TMFTHHQKIVVVDSELPSGESEKRRILSFVGGIDLCDGR) constitute a PLD phosphodiesterase 1 domain. Active-site residues include His-331, Lys-333, and Asp-338. His-331 contributes to the a 1,2-diacyl-sn-glycero-3-phosphate binding site. Residues His-370 and His-404 each coordinate Ca(2+). Residues Gln-520 and His-659 each coordinate a 1,2-diacyl-sn-glycero-3-phosphate. Residues 654-681 (FMIYVHSKMMIVDDEYIIVGSANINQRS) form the PLD phosphodiesterase 2 domain. Residues His-659, Lys-661, and Asp-666 contribute to the active site. Ca(2+) is bound at residue Glu-720.

The protein belongs to the phospholipase D family. C2-PLD subfamily. Ca(2+) is required as a cofactor.

It catalyses the reaction a 1,2-diacyl-sn-glycero-3-phosphocholine + H2O = a 1,2-diacyl-sn-glycero-3-phosphate + choline + H(+). Functionally, hydrolyzes glycerol-phospholipids at the terminal phosphodiesteric bond. Plays an important role in various cellular processes. This chain is Phospholipase D alpha 1 (PLD1), found in Nicotiana tabacum (Common tobacco).